The sequence spans 167 residues: Ribonuclease H (167 aa).

In terms of domain architecture, RNase H type-1 spans 1-143 (MYKQIEIFTD…CDQLARKAAK (143 aa)). Residues Asp-10, Glu-48, Asp-70, and Asp-135 each contribute to the Mg(2+) site.

It belongs to the RNase H family. In terms of assembly, monomer. It depends on Mg(2+) as a cofactor.

It localises to the cytoplasm. It catalyses the reaction Endonucleolytic cleavage to 5'-phosphomonoester.. Functionally, endonuclease that specifically degrades the RNA of RNA-DNA hybrids. This is Ribonuclease H from Blochmanniella floridana.